A 102-amino-acid chain; its full sequence is MFLFCFVLFCSLVFPLARGVFAWHNPAGNYGDIIVWHIYIYIYVNYTYINSFRSSYYSLTINGSTISLLKKYFLLQDLKQSVIMEKVCNCVFLKKDTDIYIC.

A signal peptide spans 1–19 (MFLFCFVLFCSLVFPLARG).

This is an uncharacterized protein from Saccharomyces cerevisiae (strain ATCC 204508 / S288c) (Baker's yeast).